The following is a 500-amino-acid chain: Cytochrome P450 71B26 (500 aa).

The helical transmembrane segment at 1–21 (MDSIWILSLLFFIIFLLLAAF) threads the bilayer. C440 contributes to the heme binding site.

This sequence belongs to the cytochrome P450 family. It depends on heme as a cofactor.

The protein resides in the membrane. This is Cytochrome P450 71B26 (CYP71B26) from Arabidopsis thaliana (Mouse-ear cress).